The chain runs to 214 residues: Phosphoenolpyruvate guanylyltransferase (214 aa).

Positions 148, 163, and 166 each coordinate phosphoenolpyruvate.

This sequence belongs to the CofC family.

The enzyme catalyses phosphoenolpyruvate + GTP + H(+) = enolpyruvoyl-2-diphospho-5'-guanosine + diphosphate. It participates in cofactor biosynthesis; coenzyme F420 biosynthesis. Functionally, guanylyltransferase that catalyzes the activation of phosphoenolpyruvate (PEP) as enolpyruvoyl-2-diphospho-5'-guanosine, via the condensation of PEP with GTP. It is involved in the biosynthesis of coenzyme F420, a hydride carrier cofactor. In Mycolicibacterium gilvum (strain PYR-GCK) (Mycobacterium gilvum (strain PYR-GCK)), this protein is Phosphoenolpyruvate guanylyltransferase.